The chain runs to 129 residues: Glutaredoxin-like protein ECU08_1380 (129 aa).

Residues 26 to 126 (EADYGEMVRR…PLLTQNREPV (101 aa)) form the Glutaredoxin domain.

The protein belongs to the glutaredoxin family.

Its subcellular location is the cytoplasm. Has a glutathione-disulfide oxidoreductase activity in the presence of NADPH and glutathione reductase. Reduces low molecular weight disulfides and proteins. The chain is Glutaredoxin-like protein ECU08_1380 from Encephalitozoon cuniculi (strain GB-M1) (Microsporidian parasite).